The following is a 124-amino-acid chain: Large ribosomal subunit protein bL12 (124 aa).

The protein belongs to the bacterial ribosomal protein bL12 family. As to quaternary structure, homodimer. Part of the ribosomal stalk of the 50S ribosomal subunit. Forms a multimeric L10(L12)X complex, where L10 forms an elongated spine to which 2 to 4 L12 dimers bind in a sequential fashion. Binds GTP-bound translation factors.

Its function is as follows. Forms part of the ribosomal stalk which helps the ribosome interact with GTP-bound translation factors. Is thus essential for accurate translation. This chain is Large ribosomal subunit protein bL12, found in Rickettsia akari (strain Hartford).